Consider the following 533-residue polypeptide: MAVESQGGRPLVLGLLLCVLGPVVSHAGKILLIPVDGSHWLSMLGAIQQLQQRGHEIVVLAPDASLYIRDGAFYTLKTYPVPFQREDVKESFVSLGHNVFENDSFLQRVIKTYKKIKKDSAMLLSGCSHLLHNKELMASLAESSFDVMLTDPFLPCSPIVAQYLSLPTVFFLHALPCSLEFEATQCPNPFSYVPRPLSSHSDHMTFLQRVKNMLIAFSQNFLCDVVYSPYATLASEFLQREVTVQDLLSSASVWLFRSDFVKDYPRPIMPNMVFVGGINCLHQNPLSQEFEAYINASGEHGIVVFSLGSMVSEIPEKKAMAIADALGKIPQTVLWRYTGTRPSNLANNTILVKWLPQNDLLGHPMTRAFITHAGSHGVYESICNGVPMVMMPLFGDQMDNAKRMETKGAGVTLNVLEMTSEDLENALKAVINDKSYKENIMRLSSLHKDRPVEPLDLAVFWVEFVMRHKGAPHLRPAAHDLTWYQYHSLDVIGFLLAVVLTVAFITFKCCAYGYRKCLGKKGRVKKAHKSKTH.

Positions 1 to 25 (MAVESQGGRPLVLGLLLCVLGPVVS) are cleaved as a signal peptide. Residues asparagine 102, asparagine 295, and asparagine 347 are each glycosylated (N-linked (GlcNAc...) asparagine). A helical transmembrane segment spans residues 491 to 507 (VIGFLLAVVLTVAFITF).

The protein belongs to the UDP-glycosyltransferase family. In terms of assembly, homodimer. Homooligomer. Interacts with UGT1A3, UGT1A4, UGT1A6, UGT1A7, UGT1A8, UGT1A9 and UGT1A10 to form heterodimers. Isoform 1 interacts with isoform 2/i2 suggesting that oligomerization is involved in negative regulation of transferase activity by isoform 2. Isoform 1 also interacts with respective i2 isoforms of UGT1A3, UGT1A4, UGT1A6, UGT1A7, UGT1A8, UGT1A9 and UGT1A10. As to expression, expressed in liver, colon and small intestine. Not expressed in kidney, esophagus and skin. In terms of tissue distribution, expressed in liver, colon, small intestine and kidney. Not expressed in esophagus and skin.

The protein resides in the endoplasmic reticulum membrane. The protein localises to the cytoplasm. It localises to the perinuclear region. The catalysed reaction is glucuronate acceptor + UDP-alpha-D-glucuronate = acceptor beta-D-glucuronoside + UDP + H(+). The enzyme catalyses 17beta-estradiol + UDP-alpha-D-glucuronate = 17beta-estradiol 3-O-(beta-D-glucuronate) + UDP + H(+). It catalyses the reaction 2-hydroxyestrone + UDP-alpha-D-glucuronate = 2-hydroxyestrone 3-O-(beta-D-glucuronate) + UDP + H(+). It carries out the reaction 2-hydroxy-17beta-estradiol + UDP-alpha-D-glucuronate = 2-hydroxy-17beta-estradiol 3-O-(beta-D-glucuronate) + UDP + H(+). The catalysed reaction is 2-methoxy-17beta-estradiol + UDP-alpha-D-glucuronate = 2-methoxy-17beta-estradiol 3-O-(beta-D-glucuronate) + UDP + H(+). The enzyme catalyses 17alpha-estradiol + UDP-alpha-D-glucuronate = 17alpha-estradiol 3-O-(beta-D-glucuronate) + UDP + H(+). It catalyses the reaction 16beta,17beta-estriol + UDP-alpha-D-glucuronate = 16beta,17beta-estriol 16-O-(beta-D-glucuronate) + UDP + H(+). It carries out the reaction losartan + UDP-alpha-D-glucuronate = losartan-2-N-beta-D-glucuronide + UDP. The catalysed reaction is prunetin + UDP-alpha-D-glucuronate = prunetin-4'-O-beta-D-glucuronide + UDP. The enzyme catalyses SN-38 + UDP-alpha-D-glucuronate = SN-38 O-beta-D-glucuronide + UDP + H(+). It catalyses the reaction (4Z,15Z)-bilirubin IXalpha + UDP-alpha-D-glucuronate = (4Z,15Z)-bilirubin IXalpha C12-beta-D-glucuronoside + UDP. It carries out the reaction (4Z,15Z)-bilirubin IXalpha + UDP-alpha-D-glucuronate = (4Z,15Z)-bilirubin IXalpha C8-beta-D-glucuronoside + UDP. The catalysed reaction is (4Z,15Z)-bilirubin IXalpha C8-beta-D-glucuronoside + UDP-alpha-D-glucuronate = (4Z,15Z)-bilirubin IXalpha C8,C12-beta-D-bisglucuronoside + UDP. The enzyme catalyses (4Z,15Z)-bilirubin IXalpha C12-beta-D-glucuronoside + UDP-alpha-D-glucuronate = (4Z,15Z)-bilirubin IXalpha C8,C12-beta-D-bisglucuronoside + UDP. It catalyses the reaction 8-iso-prostaglandin F2alpha + UDP-alpha-D-glucuronate = 8-iso-prostaglandin F2alpha-glucuronide + UDP + H(+). It carries out the reaction (5Z,8Z,11Z,14Z)-eicosatetraenoate + UDP-alpha-D-glucuronate = O-[(5Z),(8Z),(11Z),(14Z)-eicosatetraenoyl]-beta-D-glucuronate + UDP. The catalysed reaction is 15-hydroxy-(5Z,8Z,11Z,13E)-eicosatetraenoate + UDP-alpha-D-glucuronate = 15-O-(beta-D-glucuronosyl)-(5Z,8Z,11Z,14Z)-eicosatetraenoate + UDP + H(+). The enzyme catalyses 20-hydroxy-(5Z,8Z,11Z,14Z)-eicosatetraenoate + UDP-alpha-D-glucuronate = 20-O-(beta-D-glucuronosyl)-(5Z,8Z,11Z,14Z)-eicosatetraenoate + UDP + H(+). It catalyses the reaction prostaglandin B1 + UDP-alpha-D-glucuronate = 15-O-(beta-D-glucuronosyl)-prostaglandin B1 + UDP + H(+). It carries out the reaction (E)-ferulate + UDP-alpha-D-glucuronate = (E)-4-O-(beta-D-glucuronosyl)-ferulate + UDP + H(+). The catalysed reaction is (E)-ferulate + UDP-alpha-D-glucuronate = (E)-ferulic acid beta-D-glucuronate ester + UDP. UDP-glucuronosyltransferase (UGT) that catalyzes phase II biotransformation reactions in which lipophilic substrates are conjugated with glucuronic acid to increase the metabolite's water solubility, thereby facilitating excretion into either the urine or bile. Essential for the elimination and detoxification of drugs, xenobiotics and endogenous compounds. Catalyzes the glucuronidation of endogenous estrogen hormones such as estradiol, estrone and estriol. Involved in the glucuronidation of bilirubin, a degradation product occurring in the normal catabolic pathway that breaks down heme in vertebrates. Involved in the glucuronidation of arachidonic acid (AA) and AA-derived eicosanoids including 15-HETE, 20-HETE, PGB1 and F2-isoprostane (8-iso-PGF2alpha). Involved in the glucuronidation of the phytochemical ferulic acid at the phenolic or the carboxylic acid group. Also catalyzes the glucuronidation the isoflavones genistein, daidzein, glycitein, formononetin, biochanin A and prunetin, which are phytoestrogens with anticancer and cardiovascular properties. Involved in the glucuronidation of the AGTR1 angiotensin receptor antagonist losartan, a drug which can inhibit the effect of angiotensin II. Involved in the biotransformation of 7-ethyl-10-hydroxycamptothecin (SN-38), the pharmacologically active metabolite of the anticancer drug irinotecan. Functionally, lacks UGT glucuronidation activity but acts as a negative regulator of isoform 1. The chain is UDP-glucuronosyltransferase 1A1 from Homo sapiens (Human).